The following is a 176-amino-acid chain: Protein OPG163 (176 aa).

The signal sequence occupies residues 1 to 14 (MDAAFVITPMGVLT).

The protein belongs to the orthopoxvirus OPG163 family.

The protein resides in the host endosome. Its function is as follows. Mildly affects the expression of MHC class II molecules on the surface of host antigen presenting cells (APCs). This is Protein OPG163 (OPG163) from Vaccinia virus (strain Western Reserve) (VACV).